The sequence spans 398 residues: Keratinocyte differentiation factor 1 (398 aa).

Disordered regions lie at residues 1 to 60 and 123 to 156; these read MPRP…SITF and AEAN…STMG. The segment covering 44–55 has biased composition (basic and acidic residues); the sequence is RPDPKDPGHHGP. S218 carries the phosphoserine modification. Disordered regions lie at residues 307 to 340 and 369 to 392; these read RKSR…TMVG and GAPG…SGAP. Residues 377 to 389 show a composition bias toward polar residues; that stretch reads HDSSFQGTDTDSS.

The protein localises to the cytoplasm. Its subcellular location is the cell junction. Its function is as follows. Plays a role in the regulation of the epidermis formation during early development. Required both as an inhibitor of basal cell proliferation and a promoter of differentiation of basal progenitor cell progeny. The chain is Keratinocyte differentiation factor 1 (KDF1) from Homo sapiens (Human).